We begin with the raw amino-acid sequence, 237 residues long: Zinc finger protein 22 (237 aa).

Positions 1–33 are disordered; that stretch reads MRLGKPKGGISRSASQGKTYESKRKTARQRQKW. N6-acetyllysine occurs at positions 18 and 23. 5 C2H2-type zinc fingers span residues 55-82, 83-110, 111-138, 139-166, and 167-194; these read YKCTKCSKSFSQSSTLFQHKKIHTGKKS, HKCADCGKSFFQSSNLIQHRRIHTGEKP, YKCDECGERFKQSSNLIQHQRIHTGEKP, YCCDECGRCFSQSSHLIQHQRTHTGEKP, and YQCEECDKCFSQSSHLRQHMKVHKEKKS. Basic residues predominate over residues 188–217; sequence VHKEKKSHKRGKNARAKTHPVSWKRGKGRK. The disordered stretch occupies residues 188–218; that stretch reads VHKEKKSHKRGKNARAKTHPVSWKRGKGRKA.

It belongs to the krueppel C2H2-type zinc-finger protein family. As to expression, highly expressed in the ameloblast layer of mandibular incisors, moderately expressed in submandibular gland, calvaria, kidney and lung, and expressed at low levels in brain and thymus.

Its subcellular location is the nucleus. In terms of biological role, binds DNA through the consensus sequence 5'-CAATG-3'. May be involved in transcriptional regulation and may play a role in tooth formation. The chain is Zinc finger protein 22 (Znf22) from Rattus norvegicus (Rat).